The chain runs to 150 residues: MSISSSSSSSSSSSSCLLLISLMLLAASCQGRPDLQHRNHKSQLAGLFGAEVAALLEDAGAADGSSGEEAALSQRAPPSIRALHPRSGRLGLRDDLEAEPPAENKPRRRLLKDFMSSRKMFRGRTKKMQQGRGCFGMKLDRIGSMSGLGC.

An N-terminal signal peptide occupies residues 1 to 31 (MSISSSSSSSSSSSSCLLLISLMLLAASCQG). Positions 32 to 127 (RPDLQHRNHK…RKMFRGRTKK (96 aa)) are excised as a propeptide. A compositionally biased stretch (low complexity) spans 60–73 (GAADGSSGEEAALS). A disordered region spans residues 60–109 (GAADGSSGEEAALSQRAPPSIRALHPRSGRLGLRDDLEAEPPAENKPRRR). C134 and C150 form a disulfide bridge.

This sequence belongs to the natriuretic peptide family. As to expression, expressed in brain, but not in atrium or ventricle.

It is found in the secreted. In terms of biological role, hormone which plays a role in endochondral ossification through regulation of cartilaginous growth plate chondrocytes proliferation and differentiation. May also be vasoactive and natriuretic. This is C-type natriuretic peptide (cnp) from Acipenser transmontanus (White sturgeon).